The sequence spans 270 residues: MPEIIIVKNEAEAGEIYGRCVADLIKAKPDAVLGLATGSSPLAAYQALAKIVKDEAIDVSGVRGFALDEYIGLPLTHPESYHATIHRTVVEPLGLDPAKVHVPGDVLNGTPLEDGDKIALAGPAYDRAIEAAGGIDVQILGIGTDGHVGFNEPGSSLASGTRVKTLAEQTRIDNARFFDNDINQVPTHCITQGIGTIMKARHLVLLAFGAGKAEAIEETVEGGVSAFCPASALQMHPHATIIVDEEAASRLRHKDYYRYAYTHKPAWQGI.

Asp68 serves as the catalytic Proton acceptor; for enolization step. The active-site For ring-opening step is Asp145. His147 (proton acceptor; for ring-opening step) is an active-site residue. The For ring-opening step role is filled by Glu152.

This sequence belongs to the glucosamine/galactosamine-6-phosphate isomerase family. NagB subfamily.

The catalysed reaction is alpha-D-glucosamine 6-phosphate + H2O = beta-D-fructose 6-phosphate + NH4(+). Its pathway is amino-sugar metabolism; N-acetylneuraminate degradation; D-fructose 6-phosphate from N-acetylneuraminate: step 5/5. In terms of biological role, catalyzes the reversible isomerization-deamination of glucosamine 6-phosphate (GlcN6P) to form fructose 6-phosphate (Fru6P) and ammonium ion. The protein is Glucosamine-6-phosphate deaminase of Bifidobacterium longum (strain DJO10A).